We begin with the raw amino-acid sequence, 203 residues long: Probable cytochrome c oxidase subunit 3 (203 aa).

5 helical membrane passes run 30-50 (IIWLSSELMFFAGLFAMYFVA), 69-89 (LAVPVTAVLVASSFTCQMGVF), 102-122 (WYFITLLMGAFFVAGQGYEYY), 142-162 (ITTGFHGLHVIGGLIAFVFLL), and 179-199 (IVVSYYWHFVDIVWIGLFATI).

The protein belongs to the cytochrome c oxidase subunit 3 family.

Its subcellular location is the cell membrane. It catalyses the reaction 4 Fe(II)-[cytochrome c] + O2 + 8 H(+)(in) = 4 Fe(III)-[cytochrome c] + 2 H2O + 4 H(+)(out). The sequence is that of Probable cytochrome c oxidase subunit 3 (ctaE) from Nocardia farcinica (strain IFM 10152).